A 518-amino-acid polypeptide reads, in one-letter code: Probable carboxypeptidase 2 (518 aa).

The first 21 residues, 1-21 (MVAYHLLTLISLGLGSHCASA), serve as a signal peptide directing secretion. Residue Asn-46 is glycosylated (N-linked (GlcNAc...) asparagine). A disordered region spans residues 53–76 (PAFTSPGTVPRGFSDGTSGPTRDE). Residues 71 to 351 (GPTRDETMEG…VMAKSILQTA (281 aa)) enclose the Peptidase M14 domain. Asn-116 carries N-linked (GlcNAc...) asparagine glycosylation. Zn(2+)-binding residues include His-136, Glu-139, and His-224. Glu-322 serves as the catalytic Proton donor/acceptor. N-linked (GlcNAc...) asparagine glycans are attached at residues Asn-393 and Asn-459.

This sequence belongs to the peptidase M14 family. It depends on Zn(2+) as a cofactor.

It is found in the secreted. Functionally, extracellular metalloprotease that contributes to pathogenicity. The protein is Probable carboxypeptidase 2 (MCPB) of Trichophyton verrucosum (strain HKI 0517).